A 493-amino-acid chain; its full sequence is Guanosine-5'-triphosphate,3'-diphosphate pyrophosphatase (493 aa).

Belongs to the GppA/Ppx family. GppA subfamily.

It carries out the reaction guanosine 3'-diphosphate 5'-triphosphate + H2O = guanosine 3',5'-bis(diphosphate) + phosphate + H(+). The protein operates within purine metabolism; ppGpp biosynthesis; ppGpp from GTP: step 2/2. Functionally, catalyzes the conversion of pppGpp to ppGpp. Guanosine pentaphosphate (pppGpp) is a cytoplasmic signaling molecule which together with ppGpp controls the 'stringent response', an adaptive process that allows bacteria to respond to amino acid starvation, resulting in the coordinated regulation of numerous cellular activities. This is Guanosine-5'-triphosphate,3'-diphosphate pyrophosphatase from Salmonella choleraesuis (strain SC-B67).